The chain runs to 129 residues: NADH-quinone oxidoreductase subunit A (129 aa).

The next 3 membrane-spanning stretches (helical) occupy residues 14-34, 67-87, and 97-117; these read LAIH…VAAV, FLIA…FAWA, and GLIE…YLWI.

It belongs to the complex I subunit 3 family. In terms of assembly, NDH-1 is composed of 14 different subunits. Subunits NuoA, H, J, K, L, M, N constitute the membrane sector of the complex.

The protein resides in the cell inner membrane. The catalysed reaction is a quinone + NADH + 5 H(+)(in) = a quinol + NAD(+) + 4 H(+)(out). Functionally, NDH-1 shuttles electrons from NADH, via FMN and iron-sulfur (Fe-S) centers, to quinones in the respiratory chain. The immediate electron acceptor for the enzyme in this species is believed to be ubiquinone. Couples the redox reaction to proton translocation (for every two electrons transferred, four hydrogen ions are translocated across the cytoplasmic membrane), and thus conserves the redox energy in a proton gradient. This Rhodopseudomonas palustris (strain BisB18) protein is NADH-quinone oxidoreductase subunit A.